The primary structure comprises 162 residues: Nucleotide-binding protein Francci3_0558 (162 aa).

Belongs to the YajQ family.

Functionally, nucleotide-binding protein. This is Nucleotide-binding protein Francci3_0558 from Frankia casuarinae (strain DSM 45818 / CECT 9043 / HFP020203 / CcI3).